The following is a 416-amino-acid chain: NADH-quinone oxidoreductase subunit D (416 aa).

It belongs to the complex I 49 kDa subunit family. NDH-1 is composed of 14 different subunits. Subunits NuoB, C, D, E, F, and G constitute the peripheral sector of the complex.

Its subcellular location is the cell inner membrane. The enzyme catalyses a quinone + NADH + 5 H(+)(in) = a quinol + NAD(+) + 4 H(+)(out). Its function is as follows. NDH-1 shuttles electrons from NADH, via FMN and iron-sulfur (Fe-S) centers, to quinones in the respiratory chain. The immediate electron acceptor for the enzyme in this species is believed to be ubiquinone. Couples the redox reaction to proton translocation (for every two electrons transferred, four hydrogen ions are translocated across the cytoplasmic membrane), and thus conserves the redox energy in a proton gradient. The chain is NADH-quinone oxidoreductase subunit D from Gluconacetobacter diazotrophicus (strain ATCC 49037 / DSM 5601 / CCUG 37298 / CIP 103539 / LMG 7603 / PAl5).